The following is a 541-amino-acid chain: Chaperonin GroEL, cyanelle (541 aa).

Residues 29 to 32, 86 to 90, glycine 413, 479 to 481, and aspartate 495 contribute to the ATP site; these read TLGP, DGTTT, and NAA.

It belongs to the chaperonin (HSP60) family. Forms a cylinder of 14 subunits composed of two heptameric rings stacked back-to-back. Interacts with the co-chaperonin GroES.

Its subcellular location is the plastid. The protein localises to the cyanelle. It carries out the reaction ATP + H2O + a folded polypeptide = ADP + phosphate + an unfolded polypeptide.. In terms of biological role, together with its co-chaperonin GroES, plays an essential role in assisting protein folding. The GroEL-GroES system forms a nano-cage that allows encapsulation of the non-native substrate proteins and provides a physical environment optimized to promote and accelerate protein folding. The chain is Chaperonin GroEL, cyanelle from Cyanophora paradoxa.